The primary structure comprises 291 residues: Nucleotide-binding protein Athe_0320 (291 aa).

An ATP-binding site is contributed by 9 to 16 (GMSGAGKS). Position 60-63 (60-63 (DIRG)) interacts with GTP.

This sequence belongs to the RapZ-like family.

Its function is as follows. Displays ATPase and GTPase activities. The sequence is that of Nucleotide-binding protein Athe_0320 from Caldicellulosiruptor bescii (strain ATCC BAA-1888 / DSM 6725 / KCTC 15123 / Z-1320) (Anaerocellum thermophilum).